We begin with the raw amino-acid sequence, 36 residues long: Neuropeptide F (36 aa).

Phenylalanine amide is present on Phe36.

Belongs to the NPY family. In terms of tissue distribution, central and peripheral nervous system, and muscular pharynx.

Its subcellular location is the secreted. Functionally, may perform an important neurotransmitter function and may regulate muscular activity. In Arthurdendyus triangulatus (New Zealand flatworm), this protein is Neuropeptide F.